The primary structure comprises 168 residues: NADH dehydrogenase [ubiquinone] 1 alpha subcomplex assembly factor 2 (168 aa).

Basic and acidic residues predominate over residues 108–118 (KEKLLQEESNK). Positions 108-168 (KEKLLQEESN…MPHGDKGHSQ (61 aa)) are disordered. The residue at position 133 (Ser-133) is a Phosphoserine. Residues 144–155 (ESPTSTGKTFQP) show a composition bias toward polar residues.

The protein belongs to the complex I NDUFA12 subunit family. Interacts with ARMC9.

The protein localises to the mitochondrion. In terms of biological role, acts as a molecular chaperone for mitochondrial complex I assembly. Complex I functions in the transfer of electrons from NADH to the respiratory chain. The immediate electron acceptor for the enzyme is believed to be ubiquinone. Is involved in the initial steps of cilia formation, including removal of CP110 from the mother centrioles, docking of membrane vesicles to the mother centrioles, and establishment of the transition zone. This is NADH dehydrogenase [ubiquinone] 1 alpha subcomplex assembly factor 2 (NDUFAF2) from Bos taurus (Bovine).